The chain runs to 229 residues: Cytidylate kinase (229 aa).

ATP is bound at residue 12 to 20; it reads GPSGSGKGT.

It belongs to the cytidylate kinase family. Type 1 subfamily.

It localises to the cytoplasm. The enzyme catalyses CMP + ATP = CDP + ADP. The catalysed reaction is dCMP + ATP = dCDP + ADP. The sequence is that of Cytidylate kinase from Azotobacter vinelandii (strain DJ / ATCC BAA-1303).